A 238-amino-acid polypeptide reads, in one-letter code: Protein odd-skipped-related 2 (238 aa).

The tract at residues 105–126 (EDPPVTGQSRLSPERRPARGRL) is disordered. C2H2-type zinc fingers lie at residues 134–156 (FICR…ERTH), 162–184 (YTCD…RYIH), and 190–212 (FKCQ…KTLH).

It belongs to the Odd C2H2-type zinc-finger protein family. As to expression, at the 8-somite stage, expressed in the pronephros, with weak generalized expression elsewhere. At 24 hpf, expressed in the kidney tubules and the anterior duct, and also in the gut. At 60 hpf, expressed in the tubules and the pectoral fin buds.

It is found in the nucleus. Functionally, transcriptional repressor. Required for pronephric kidney development. This chain is Protein odd-skipped-related 2, found in Danio rerio (Zebrafish).